The sequence spans 267 residues: MHRIAVPAATGAPTAQEPVKVAARNLDFYYDKYHALKSINIEIPEKRVTALIGPSGCGKSTLLRIFNRIYALYPKMEARGEVLLDNENILSPKYPMNRLRSKVGMVFQKPVPFPMTIFENVAYGIRHHEKLSKADMQNRVEQALRQGALWDEVKDKLGQSALGLSGGQQQRLCIARAVALRPDVLLLDEPTSALDPISTSRIEQLVEELKRDYTIVIVTHNMQQAARVSDYTAFMYLGDLIEHDRTETIFSQPSKQQTEDYITGRFG.

Residues 21–262 (VAARNLDFYY…PSKQQTEDYI (242 aa)) form the ABC transporter domain. Residue 53 to 60 (GPSGCGKS) participates in ATP binding.

The protein belongs to the ABC transporter superfamily. Phosphate importer (TC 3.A.1.7) family. In terms of assembly, the complex is composed of two ATP-binding proteins (PstB), two transmembrane proteins (PstC and PstA) and a solute-binding protein (PstS).

The protein localises to the cell inner membrane. The catalysed reaction is phosphate(out) + ATP + H2O = ADP + 2 phosphate(in) + H(+). Part of the ABC transporter complex PstSACB involved in phosphate import. Responsible for energy coupling to the transport system. In Xanthomonas euvesicatoria pv. vesicatoria (strain 85-10) (Xanthomonas campestris pv. vesicatoria), this protein is Phosphate import ATP-binding protein PstB.